The sequence spans 207 residues: NAD(P)H-quinone oxidoreductase subunit K, chloroplastic (207 aa).

Positions 47, 48, 112, and 143 each coordinate [4Fe-4S] cluster.

Belongs to the complex I 20 kDa subunit family. NDH is composed of at least 16 different subunits, 5 of which are encoded in the nucleus. Requires [4Fe-4S] cluster as cofactor.

The protein localises to the plastid. Its subcellular location is the chloroplast thylakoid membrane. It carries out the reaction a plastoquinone + NADH + (n+1) H(+)(in) = a plastoquinol + NAD(+) + n H(+)(out). The enzyme catalyses a plastoquinone + NADPH + (n+1) H(+)(in) = a plastoquinol + NADP(+) + n H(+)(out). Its function is as follows. NDH shuttles electrons from NAD(P)H:plastoquinone, via FMN and iron-sulfur (Fe-S) centers, to quinones in the photosynthetic chain and possibly in a chloroplast respiratory chain. The immediate electron acceptor for the enzyme in this species is believed to be plastoquinone. Couples the redox reaction to proton translocation, and thus conserves the redox energy in a proton gradient. The polypeptide is NAD(P)H-quinone oxidoreductase subunit K, chloroplastic (Psilotum nudum (Whisk fern)).